Reading from the N-terminus, the 299-residue chain is Syntenin-1 (299 aa).

S2 carries the post-translational modification N-acetylserine. The interval 2-103 (SLYPSLEDLK…VAPVTGNDAG (102 aa)) is interaction with PDCD6IP. 3 consecutive short sequence motifs (LYPX(n)L motif) follow at residues 3 to 7 (LYPSL), 46 to 50 (LYPKL), and 50 to 54 (LYPEL). S6 bears the Phosphoserine mark. Y47 is modified (phosphotyrosine). PDZ domains lie at 115-194 (EVIL…IRDR) and 199-273 (TVTM…IMPT). Position 251-252 (251-252 (KD)) interacts with a 1,2-diacyl-sn-glycero-3-phospho-(1D-myo-inositol-4,5-bisphosphate).

As to quaternary structure, monomer and homodimer. Interacts with SDC1, SDC2, SDC3, SDC4, NRXN2, EPHA7, EPHB1, NF2 isoform 1, TGFA, IL5RA, NFASC, SDCBP2 and PTPRJ. Interacts with PDCD6IP. Forms a complex with PDCD6IP and SDC2. Interacts (via C-terminus) with TGFBR1. Binds to FZD7; this interaction is increased by inositol trisphosphate (IP3). Interacts with SMO. In terms of processing, phosphorylated on tyrosine residues.

The protein localises to the cell junction. It is found in the focal adhesion. Its subcellular location is the adherens junction. It localises to the cell membrane. The protein resides in the endoplasmic reticulum membrane. The protein localises to the nucleus. It is found in the melanosome. Its subcellular location is the cytoplasm. It localises to the cytosol. The protein resides in the cytoskeleton. The protein localises to the secreted. It is found in the extracellular exosome. Its subcellular location is the membrane raft. Its function is as follows. Multifunctional adapter protein involved in diverse array of functions including trafficking of transmembrane proteins, neuro and immunomodulation, exosome biogenesis, and tumorigenesis. Positively regulates TGFB1-mediated SMAD2/3 activation and TGFB1-induced epithelial-to-mesenchymal transition (EMT) and cell migration in various cell types. May increase TGFB1 signaling by enhancing cell-surface expression of TGFR1 by preventing the interaction between TGFR1 and CAV1 and subsequent CAV1-dependent internalization and degradation of TGFR1. In concert with SDC1/4 and PDCD6IP, regulates exosome biogenesis. Regulates migration, growth, proliferation, and cell cycle progression in a variety of cancer types. In adherens junctions may function to couple syndecans to cytoskeletal proteins or signaling components. Seems to couple transcription factor SOX4 to the IL-5 receptor (IL5RA). May also play a role in vesicular trafficking. Seems to be required for the targeting of TGFA to the cell surface in the early secretory pathway. In Mus musculus (Mouse), this protein is Syntenin-1 (Sdcbp).